The chain runs to 214 residues: uncharacterized protein (214 aa).

The segment at 131–214 (TEDILSPPSP…SSSSDSLDAY (84 aa)) is disordered. Positions 174–189 (HRRRRTRRQLRYRQRV) are enriched in basic residues. The span at 197-214 (DLGEPLESSSSSDSLDAY) shows a compositional bias: low complexity.

This is an uncharacterized protein from Tupaia.